The following is a 395-amino-acid chain: MADGLTDIDSSQITTNYDEVVTSFDDLGLKDELLRGIYGYGFENPSSIQQRAILPVIKGNDVLAQAQSGTGKTATFSISALQNIDEKIKKPQALIIAPTRELAHQIQKVVLAFGEYMKIECHACIGGTSVAEDIRVIQEGVHVIVGTPGRIHDMIERRILKTDLIKMFILDEADEMLSREFKDPIYDIFTTLPETTQTVLLSATMPAEVLDITGKFMRDPVRILVKKDELTLEGIKQFYIDVEQESYKFEVLCDLYETINVSQAVIFCNTRRKVDYLTQALTEADFTVSSMHGETEQSQRDVIMKAFRTGSSRILITTDLLARGIDVQQVSLVINFDLPSNRENYIHRIGRGGRFGRKGVAINFVTSEDHGMLKELERFYSTEIVEMPTNIADLI.

Positions 22 to 50 (TSFDDLGLKDELLRGIYGYGFENPSSIQQ) match the Q motif motif. Residues 53 to 223 (ILPVIKGNDV…GKFMRDPVRI (171 aa)) enclose the Helicase ATP-binding domain. Residue 66–73 (AQSGTGKT) coordinates ATP. The DEAD box signature appears at 171–174 (DEAD). In terms of domain architecture, Helicase C-terminal spans 234–395 (GIKQFYIDVE…EMPTNIADLI (162 aa)).

The protein belongs to the DEAD box helicase family. eIF4A subfamily. As to quaternary structure, component of the eIF4F complex, which composition varies with external and internal environmental conditions. It is composed of at least eIF4A, eIF4E and eIF4G.

Its subcellular location is the cytoplasm. The catalysed reaction is ATP + H2O = ADP + phosphate + H(+). In terms of biological role, ATP-dependent RNA helicase which is a subunit of the eIF4F complex involved in cap recognition and is required for mRNA binding to ribosome. In the current model of translation initiation, eIF4A unwinds RNA secondary structures in the 5'-UTR of mRNAs which is necessary to allow efficient binding of the small ribosomal subunit, and subsequent scanning for the initiator codon. The polypeptide is ATP-dependent RNA helicase eIF4A (TIF1) (Yarrowia lipolytica (strain CLIB 122 / E 150) (Yeast)).